Consider the following 206-residue polypeptide: Protein Nef (206 aa).

A disordered region spans residues 1–46 (MGNKWSKCSTVGRPAIRERMRRAPAAEGVGPASQDSDKYGALTSSS). The N-myristoyl glycine; by host moiety is linked to residue glycine 2. Residue serine 6 is modified to Phosphoserine; by host. Residues 61–65 (QEEEE) form an acidic; interacts with host PACS1 and PACS2; stabilizes the interaction of NEF/MHC-I with host AP1M1; necessary for MHC-I internalization region. An SH3-binding; interaction with Src family tyrosine kinases region spans residues 69 to 78 (PVRPQVPLRP). The PxxP; stabilizes the interaction of NEF/MHC-I with host AP1M1; necessary for MHC-I internalization motif lies at 72 to 75 (PQVP). Residues 108-124 (DILDLWVYNTQGYFPDW) are mediates dimerization, Nef-PTE1 interaction. Residues 148–180 (VDPREVEEANTGENNSLLHPMSLHGMEDSHREV) are binding to ATP6V1H. Residues 164 to 165 (LL) carry the Dileucine internalization motif; necessary for CD4 internalization motif. A Diacidic; necessary for CD4 internalization motif is present at residues 174 to 175 (ED).

Belongs to the lentivirus primate group Nef protein family. Monomer; cytosolic form. Homodimer; membrane bound form. Interacts with Nef associated p21-activated kinase (PAK2); this interaction activates PAK2. Associates with the Nef-MHC-I-AP1 complex; this complex is required for MHC-I internalization. Interacts (via C-terminus) with host PI3-kinase. Interacts with host PACS1; this interaction seems to be weak. Interacts with host PACS2. Interacts with host LCK and MAPK3; these interactions inhibit the kinase activity of the latter. Interacts with host ATP6V1H; this interaction may play a role in CD4 endocytosis. Associates with the CD4-Nef-AP2 complex; this complex is required for CD4 internalization. Interacts with host AP2 subunit alpha and AP2 subunit sigma2. Interacts with TCR-zeta chain; this interaction up-regulates the Fas ligand (FasL) surface expression. Interacts with host HCK, LYN, and SRC; these interactions activate the Src family kinases. Interacts with MAP3K5; this interaction inhibits the Fas and TNFR-mediated death signals. Interacts with beta-COP and PTE1. Interacts with human RACK1; this increases Nef phosphorylation by PKC. Interacts with TP53; this interaction decreases the half-life of TP53, protecting the infected cell against p53-mediated apoptosis. The virion-associated Nef proteins are cleaved by the viral protease to release the soluble C-terminal core protein. Nef is probably cleaved concomitantly with viral structural proteins on maturation of virus particles. Post-translationally, myristoylated. In terms of processing, phosphorylated on serine residues, probably by host PKCdelta and theta.

The protein resides in the host cell membrane. The protein localises to the virion. It localises to the secreted. Its subcellular location is the host Golgi apparatus membrane. Its function is as follows. Factor of infectivity and pathogenicity, required for optimal virus replication. Alters numerous pathways of T-lymphocyte function and down-regulates immunity surface molecules in order to evade host defense and increase viral infectivity. Alters the functionality of other immunity cells, like dendritic cells, monocytes/macrophages and NK cells. Functionally, in infected CD4(+) T-lymphocytes, down-regulates the surface MHC-I, mature MHC-II, CD4, CD28, CCR5 and CXCR4 molecules. Mediates internalization and degradation of host CD4 through the interaction of with the cytoplasmic tail of CD4, the recruitment of AP-2 (clathrin adapter protein complex 2), internalization through clathrin coated pits, and subsequent transport to endosomes and lysosomes for degradation. Diverts host MHC-I molecules to the trans-Golgi network-associated endosomal compartments by an endocytic pathway to finally target them for degradation. MHC-I down-regulation may involve AP-1 (clathrin adapter protein complex 1) or possibly Src family kinase-ZAP70/Syk-PI3K cascade recruited by PACS2. In consequence infected cells are masked for immune recognition by cytotoxic T-lymphocytes. Decreasing the number of immune receptors also prevents reinfection by more HIV particles (superinfection). Down-regulates host SERINC3 and SERINC5 thereby excluding these proteins from the viral particles. Virion infectivity is drastically higher when SERINC3 or SERINC5 are excluded from the viral envelope, because these host antiviral proteins impair the membrane fusion event necessary for subsequent virion penetration. In terms of biological role, bypasses host T-cell signaling by inducing a transcriptional program nearly identical to that of anti-CD3 cell activation. Interaction with TCR-zeta chain up-regulates the Fas ligand (FasL). Increasing surface FasL molecules and decreasing surface MHC-I molecules on infected CD4(+) cells send attacking cytotoxic CD8+ T-lymphocytes into apoptosis. Plays a role in optimizing the host cell environment for viral replication without causing cell death by apoptosis. Protects the infected cells from apoptosis in order to keep them alive until the next virus generation is ready to strike. Inhibits the Fas and TNFR-mediated death signals by blocking MAP3K5/ASK1. Decreases the half-life of TP53, protecting the infected cell against p53-mediated apoptosis. Inhibits the apoptotic signals regulated by the Bcl-2 family proteins through the formation of a Nef/PI3-kinase/PAK2 complex that leads to activation of PAK2 and induces phosphorylation of host BAD. Its function is as follows. Extracellular Nef protein targets CD4(+) T-lymphocytes for apoptosis by interacting with CXCR4 surface receptors. This Human immunodeficiency virus type 1 group M subtype C (isolate 92BR025) (HIV-1) protein is Protein Nef.